The following is a 313-amino-acid chain: Alpha-S1-casein (313 aa).

The signal sequence occupies residues Met1–Ala15. Residues Ala77 to Ser96 show a composition bias toward low complexity. The disordered stretch occupies residues Ala77–Asn111. Ser90, Ser91, Ser93, Ser94, Ser95, and Ser96 each carry phosphoserine. 15 tandem repeats follow at residues Leu135–Ser140, Leu141–Ser146, Leu147–Ser152, Leu153–Ser158, Leu159–Ser164, Leu165–Ser170, Leu171–Ser176, Met177–Ser182, Leu183–Leu188, Leu189–Ser194, Leu195–Ser200, Pro201–Ser206, Leu207–Phe212, Leu213–Ser218, and Leu219–His224. The segment at Leu135–His224 is 15 X 6 AA tandem repeats.

Belongs to the alpha-casein family. Mammary gland specific. Secreted in milk.

Its subcellular location is the secreted. Its function is as follows. Important role in the capacity of milk to transport calcium phosphate. This chain is Alpha-S1-casein (Csn1s1), found in Mus musculus (Mouse).